Consider the following 202-residue polypeptide: Proteasome subunit beta 1 (202 aa).

A propeptide spans 1-8 (MGEVVLPG) (removed in mature form; by autocatalysis). Thr-9 (nucleophile) is an active-site residue.

The protein belongs to the peptidase T1B family. As to quaternary structure, the 20S proteasome core is composed of 14 alpha and 14 beta subunits that assemble into four stacked heptameric rings, resulting in a barrel-shaped structure. The two inner rings, each composed of seven catalytic beta subunits, are sandwiched by two outer rings, each composed of seven alpha subunits. The catalytic chamber with the active sites is on the inside of the barrel. Has a gated structure, the ends of the cylinder being occluded by the N-termini of the alpha-subunits. Is capped at one or both ends by the proteasome regulatory ATPase, PAN.

It localises to the cytoplasm. It catalyses the reaction Cleavage of peptide bonds with very broad specificity.. Its activity is regulated as follows. The formation of the proteasomal ATPase PAN-20S proteasome complex, via the docking of the C-termini of PAN into the intersubunit pockets in the alpha-rings, triggers opening of the gate for substrate entry. Interconversion between the open-gate and close-gate conformations leads to a dynamic regulation of the 20S proteasome proteolysis activity. Its function is as follows. Component of the proteasome core, a large protease complex with broad specificity involved in protein degradation. The sequence is that of Proteasome subunit beta 1 from Desulfurococcus amylolyticus (strain DSM 18924 / JCM 16383 / VKM B-2413 / 1221n) (Desulfurococcus kamchatkensis).